A 181-amino-acid chain; its full sequence is Caveolin-1 (181 aa).

Over 1–107 (MTGGLRDGEK…TKYWCYRLLT (107 aa)) the chain is Cytoplasmic. Positions 108–128 (ALVGIPLALIWGIFFAILSFI) form an intramembrane region, helical. The Cytoplasmic portion of the chain corresponds to 129–181 (HIWAVVPCVKSYLIEIHCISRVYSICVHTFCDPLFEAMGKCLGGVRIRTSKEV). 3 S-palmitoyl cysteine lipidation sites follow: Cys-136, Cys-146, and Cys-159.

This sequence belongs to the caveolin family. Homooligomer.

The protein localises to the golgi apparatus membrane. The protein resides in the cell membrane. It is found in the membrane. It localises to the caveola. Its subcellular location is the membrane raft. May act as a positive regulator of T-cell coactivation. May act as a scaffolding protein within caveolar membranes. Interacts directly with G-protein alpha subunits and can functionally regulate their activity. This Takifugu rubripes (Japanese pufferfish) protein is Caveolin-1 (cav1).